The following is a 917-amino-acid chain: MIAAQLLAYYFTELKDDQVKKIDKYLYAMRLSDETLIDIMTRFRKEMKNGLSRDFNPTATVKMLPTFVRSIPDGSEKGDFIALDLGGSSFRILRVQVNHEKNQNVHMESEVYDTPENIVHGSGSQLFDHVAECLGDFMEKRKIKDKKSPVGFTFSFPCQQSKIDEAVLITWTKRFKASGVEGADVVKLLNKAIKKRGDYDANIVAVVNDTVGTMMTCGYDDQHCEVGLIIGTGTNACYMEELRHIDLVEGDEGRMCINTEWGAFGDDGSLEDIRTEFDREIDRGSLNPGKQLFEKMVSGMYLGELVRLILVKMAKEGLLFEGRITPELLTRGKFNTSDVSAIEKNKEGLHNAKEILTRLGVEPSDDDCVSVQHVCTIVSFRSANLVAATLGAILNRLRDNKGTPRLRTTVGVDGSLYKTHPQYSRRFHKTLRRLVPDSDVRFLLSESGSGKGAAMVTAVAYRLAEQHRQIEETLAHFHLTKDMLLEVKKRMRAEMELGLRKQTHNNAAVKMLPSFVRRTPDGTENGDFLALDLGGTNFRVLLVKIRSGKKRTVEMHNKIYAIPIEIMQGTGEELFDHIVSCISDFLDYMGIKGPRMPLGFTFSFPCKQTSLDAGILITWTKGFKATDCVGNDVATLLRDAIKRREEFDLDVVAVVNDTVGTMMTCAYEEPTCEVGLIVGTGSNACYMEEMKNVEMVEGDQGQMCINMEWGAFGDNGCLDDIRTHYDRLVDEYSLNAGKQRYEKMISGMYLGEIVRNILIDFTKKGFLFRGQISEPLKTRGIFETKFLSQIESDRLALLQVRAILQQLGLNSTCDDSILVKTVCGVVSRRAAQLCGAGMAAVVDKIRENRGLDRLNVTVGVDGTLYKLHPHFSRIMHQTVKELSPKCNVSFLLSEDGSGKGAALITAVGVRLRTEASS.

An N-acetylmethionine modification is found at methionine 1. A mitochondrial-binding peptide (MBP) region spans residues 1 to 10 (MIAAQLLAYY). 2 Hexokinase domains span residues 16–458 (DDQV…MVTA) and 464–906 (AEQH…LITA). ATP-binding positions include arginine 30 and 84–89 (DLGGSS). The interval 73 to 207 (DGSEKGDFIA…DYDANIVAVV (135 aa)) is hexokinase small subdomain 1. 84–91 (DLGGSSFR) serves as a coordination point for D-glucose 6-phosphate. D-glucose-binding positions include serine 155, 172 to 173 (TK), and 208 to 209 (ND). Residues 208 to 447 (NDTVGTMMTC…SDVRFLLSES (240 aa)) form a hexokinase large subdomain 1 region. The D-glucose 6-phosphate site is built by aspartate 209 and threonine 232. D-glucose-binding positions include asparagine 235, glutamate 260, and 291-294 (QLFE). Serine 337 carries the phosphoserine modification. Asparagine 345 serves as a coordination point for ATP. 413–415 (DGS) contacts D-glucose 6-phosphate. 425–426 (RR) is a binding site for ATP. D-glucose 6-phosphate contacts are provided by residues serine 449 and 532–536 (DLGGT). The hexokinase small subdomain 2 stretch occupies residues 521-655 (DGTENGDFLA…EFDLDVVAVV (135 aa)). 532-537 (DLGGTN) lines the ATP pocket. D-glucose contacts are provided by residues 603 to 604 (SF), 620 to 621 (TK), and 656 to 657 (ND). The tract at residues 656 to 895 (NDTVGTMMTC…CNVSFLLSED (240 aa)) is hexokinase large subdomain 2. Residues aspartate 657 and threonine 680 each contribute to the D-glucose 6-phosphate site. Threonine 680 is an ATP binding site. Residues 682–683 (SN), glutamate 708, and glutamate 742 contribute to the D-glucose site. Residues 747–748 (GM), 784–788 (TKFLS), and 863–867 (TLYKL) each bind ATP. D-glucose 6-phosphate-binding positions include 861–863 (DGT) and serine 897.

The protein belongs to the hexokinase family. In terms of assembly, monomer. Interacts with RABL2/RABL2A; binds preferentially to GTP-bound RABL2. Interacts with VDAC1. The HK1-VDAC1 complex interacts with ATF2. Interacts (via N-terminal spermatogenic cell-specific region) with PFKM (via C-terminus). Interacts with SMAD5.

Its subcellular location is the mitochondrion outer membrane. The protein localises to the cytoplasm. It localises to the cytosol. The catalysed reaction is a D-hexose + ATP = a D-hexose 6-phosphate + ADP + H(+). It carries out the reaction D-fructose + ATP = D-fructose 6-phosphate + ADP + H(+). It catalyses the reaction D-glucose + ATP = D-glucose 6-phosphate + ADP + H(+). The enzyme catalyses D-mannose + ATP = D-mannose 6-phosphate + ADP + H(+). The catalysed reaction is D-glucosamine + ATP = D-glucosamine 6-phosphate + ADP + H(+). The protein operates within carbohydrate metabolism; hexose metabolism. It participates in carbohydrate degradation; glycolysis; D-glyceraldehyde 3-phosphate and glycerone phosphate from D-glucose: step 1/4. Its activity is regulated as follows. Hexokinase is an allosteric enzyme inhibited by its product D-glucose 6-phosphate. Hexokinase activity is inhibited by N-acetyl-D-glucosamine. In terms of biological role, catalyzes the phosphorylation of various hexoses, such as D-glucose, D-glucosamine, D-fructose, D-mannose and 2-deoxy-D-glucose, to hexose 6-phosphate (D-glucose 6-phosphate, D-glucosamine 6-phosphate, D-fructose 6-phosphate, D-mannose 6-phosphate and 2-deoxy-D-glucose 6-phosphate, respectively). Does not phosphorylate N-acetyl-D-glucosamine. Mediates the initial step of glycolysis by catalyzing phosphorylation of D-glucose to D-glucose 6-phosphate. Involved in innate immunity and inflammation by acting as a pattern recognition receptor for bacterial peptidoglycan. When released in the cytosol, N-acetyl-D-glucosamine component of bacterial peptidoglycan inhibits the hexokinase activity of HK1 and causes its dissociation from mitochondrial outer membrane, thereby activating the NLRP3 inflammasome. The protein is Hexokinase-1 of Pongo abelii (Sumatran orangutan).